An 88-amino-acid chain; its full sequence is CRISPR-associated endoribonuclease Cas2 3 (88 aa).

Asp-9 lines the Mg(2+) pocket.

Belongs to the CRISPR-associated endoribonuclease Cas2 protein family. As to quaternary structure, homodimer, forms a heterotetramer with a Cas1 homodimer. The cofactor is Mg(2+).

Its function is as follows. CRISPR (clustered regularly interspaced short palindromic repeat), is an adaptive immune system that provides protection against mobile genetic elements (viruses, transposable elements and conjugative plasmids). CRISPR clusters contain sequences complementary to antecedent mobile elements and target invading nucleic acids. CRISPR clusters are transcribed and processed into CRISPR RNA (crRNA). Functions as a ssRNA-specific endoribonuclease. Involved in the integration of spacer DNA into the CRISPR cassette. In Thermodesulfovibrio yellowstonii (strain ATCC 51303 / DSM 11347 / YP87), this protein is CRISPR-associated endoribonuclease Cas2 3.